Consider the following 191-residue polypeptide: MNHEEQKVEAMEQVEAQPVEPTDVDSEVTAEQARIAELEAQLDAAQQASLEERERAIRAVAEMENLRRRAAQDVEKAHKFALEKFAAELLPVLDNLERAIELADKENEALKPMIEGVELTLKSMQSSVGKFGLNPLDPLNQPFDPNAHQAMSMIENAELAPNTVIAVMQKGYELNGRVIRPAMVMVSKAPA.

Basic and acidic residues predominate over residues 1–10 (MNHEEQKVEA). The segment at 1-28 (MNHEEQKVEAMEQVEAQPVEPTDVDSEV) is disordered.

Belongs to the GrpE family. In terms of assembly, homodimer.

Its subcellular location is the cytoplasm. In terms of biological role, participates actively in the response to hyperosmotic and heat shock by preventing the aggregation of stress-denatured proteins, in association with DnaK and GrpE. It is the nucleotide exchange factor for DnaK and may function as a thermosensor. Unfolded proteins bind initially to DnaJ; upon interaction with the DnaJ-bound protein, DnaK hydrolyzes its bound ATP, resulting in the formation of a stable complex. GrpE releases ADP from DnaK; ATP binding to DnaK triggers the release of the substrate protein, thus completing the reaction cycle. Several rounds of ATP-dependent interactions between DnaJ, DnaK and GrpE are required for fully efficient folding. This is Protein GrpE from Aeromonas hydrophila subsp. hydrophila (strain ATCC 7966 / DSM 30187 / BCRC 13018 / CCUG 14551 / JCM 1027 / KCTC 2358 / NCIMB 9240 / NCTC 8049).